Consider the following 498-residue polypeptide: Glycerol kinase (498 aa).

Residue T12 coordinates ADP. ATP-binding residues include T12, T13, and S14. T12 lines the sn-glycerol 3-phosphate pocket. R16 is an ADP binding site. Positions 82, 83, 134, and 244 each coordinate sn-glycerol 3-phosphate. Residues R82, E83, Y134, D244, and Q245 each coordinate glycerol. Residues T266 and G310 each contribute to the ADP site. T266, G310, Q314, and G411 together coordinate ATP. The ADP site is built by G411 and N415.

Belongs to the FGGY kinase family.

The enzyme catalyses glycerol + ATP = sn-glycerol 3-phosphate + ADP + H(+). It functions in the pathway polyol metabolism; glycerol degradation via glycerol kinase pathway; sn-glycerol 3-phosphate from glycerol: step 1/1. With respect to regulation, inhibited by fructose 1,6-bisphosphate (FBP). Key enzyme in the regulation of glycerol uptake and metabolism. Catalyzes the phosphorylation of glycerol to yield sn-glycerol 3-phosphate. This chain is Glycerol kinase, found in Azorhizobium caulinodans (strain ATCC 43989 / DSM 5975 / JCM 20966 / LMG 6465 / NBRC 14845 / NCIMB 13405 / ORS 571).